Reading from the N-terminus, the 1377-residue chain is DNA-directed RNA polymerase subunit beta (1377 aa).

It belongs to the RNA polymerase beta chain family. As to quaternary structure, the RNAP catalytic core consists of 2 alpha, 1 beta, 1 beta' and 1 omega subunit. When a sigma factor is associated with the core the holoenzyme is formed, which can initiate transcription.

It catalyses the reaction RNA(n) + a ribonucleoside 5'-triphosphate = RNA(n+1) + diphosphate. Its function is as follows. DNA-dependent RNA polymerase catalyzes the transcription of DNA into RNA using the four ribonucleoside triphosphates as substrates. In Aromatoleum aromaticum (strain DSM 19018 / LMG 30748 / EbN1) (Azoarcus sp. (strain EbN1)), this protein is DNA-directed RNA polymerase subunit beta.